Reading from the N-terminus, the 179-residue chain is ATP synthase subunit delta (179 aa).

This sequence belongs to the ATPase delta chain family. In terms of assembly, F-type ATPases have 2 components, F(1) - the catalytic core - and F(0) - the membrane proton channel. F(1) has five subunits: alpha(3), beta(3), gamma(1), delta(1), epsilon(1). F(0) has three main subunits: a(1), b(2) and c(10-14). The alpha and beta chains form an alternating ring which encloses part of the gamma chain. F(1) is attached to F(0) by a central stalk formed by the gamma and epsilon chains, while a peripheral stalk is formed by the delta and b chains.

It is found in the cell inner membrane. Functionally, f(1)F(0) ATP synthase produces ATP from ADP in the presence of a proton or sodium gradient. F-type ATPases consist of two structural domains, F(1) containing the extramembraneous catalytic core and F(0) containing the membrane proton channel, linked together by a central stalk and a peripheral stalk. During catalysis, ATP synthesis in the catalytic domain of F(1) is coupled via a rotary mechanism of the central stalk subunits to proton translocation. This protein is part of the stalk that links CF(0) to CF(1). It either transmits conformational changes from CF(0) to CF(1) or is implicated in proton conduction. This is ATP synthase subunit delta from Burkholderia multivorans (strain ATCC 17616 / 249).